A 122-amino-acid chain; its full sequence is Cytochrome b-c1 complex subunit 7-1, mitochondrial (122 aa).

This sequence belongs to the UQCRB/QCR7 family. Component of the ubiquinol-cytochrome c oxidoreductase (cytochrome b-c1 complex, complex III, CIII), a multisubunit enzyme composed of 10 subunits. The complex is composed of 3 respiratory subunits cytochrome b (MT-CYB), cytochrome c1 (CYC1-1 or CYC1-2) and Rieske protein (UCR1-1 or UCR1-2), 2 core protein subunits MPPalpha1 (or MPPalpha2) and MPPB, and 5 low-molecular weight protein subunits QCR7-1 (or QCR7-2), UCRQ-1 (or UCRQ-2), QCR9, UCRY and probably QCR6-1 (or QCR6-2). The complex exists as an obligatory dimer and forms supercomplexes (SCs) in the inner mitochondrial membrane with NADH-ubiquinone oxidoreductase (complex I, CI), resulting in different assemblies (supercomplexes SCI(1)III(2) and SCI(2)III(4)).

Its subcellular location is the mitochondrion inner membrane. In terms of biological role, component of the ubiquinol-cytochrome c oxidoreductase, a multisubunit transmembrane complex that is part of the mitochondrial electron transport chain which drives oxidative phosphorylation. The respiratory chain contains 3 multisubunit complexes succinate dehydrogenase (complex II, CII), ubiquinol-cytochrome c oxidoreductase (cytochrome b-c1 complex, complex III, CIII) and cytochrome c oxidase (complex IV, CIV), that cooperate to transfer electrons derived from NADH and succinate to molecular oxygen, creating an electrochemical gradient over the inner membrane that drives transmembrane transport and the ATP synthase. The cytochrome b-c1 complex catalyzes electron transfer from ubiquinol to cytochrome c, linking this redox reaction to translocation of protons across the mitochondrial inner membrane, with protons being carried across the membrane as hydrogens on the quinol. In the process called Q cycle, 2 protons are consumed from the matrix, 4 protons are released into the intermembrane space and 2 electrons are passed to cytochrome c. The chain is Cytochrome b-c1 complex subunit 7-1, mitochondrial (QCR7-1) from Arabidopsis thaliana (Mouse-ear cress).